Here is a 252-residue protein sequence, read N- to C-terminus: Ribosomal RNA small subunit methyltransferase J (252 aa).

S-adenosyl-L-methionine contacts are provided by residues 101 to 102 (RD), 117 to 118 (ER), 153 to 154 (SS), and aspartate 171.

The protein belongs to the methyltransferase superfamily. RsmJ family.

It is found in the cytoplasm. The enzyme catalyses guanosine(1516) in 16S rRNA + S-adenosyl-L-methionine = N(2)-methylguanosine(1516) in 16S rRNA + S-adenosyl-L-homocysteine + H(+). In terms of biological role, specifically methylates the guanosine in position 1516 of 16S rRNA. The chain is Ribosomal RNA small subunit methyltransferase J from Salmonella choleraesuis (strain SC-B67).